Consider the following 265-residue polypeptide: Eukaryotic translation initiation factor 3 subunit J (265 aa).

Acidic residues-rich tracts occupy residues 1–12 (MAPERWDDEEDS) and 26–44 (DEEE…DSEV). Disordered regions lie at residues 1–113 (MAPE…DADL) and 212–265 (TMSN…DDFM). 2 stretches are compositionally biased toward basic and acidic residues: residues 45–65 (EREK…EAAA) and 73–86 (RIQE…KKAE). Residues 61–95 (AEAAAKKKSKSQRIQEHKEERKKKAEEEDSDSEEE) are a coiled coil. Residues 87 to 97 (EEDSDSEEEDD) show a composition bias toward acidic residues. Residues 216-228 (EKMREERAADKGS) are compositionally biased toward basic and acidic residues. The segment covering 251–265 (DYDNGDDGLGDDDFM) has biased composition (acidic residues).

This sequence belongs to the eIF-3 subunit J family. In terms of assembly, component of the eukaryotic translation initiation factor 3 (eIF-3) complex.

The protein resides in the cytoplasm. Its function is as follows. Component of the eukaryotic translation initiation factor 3 (eIF-3) complex, which is involved in protein synthesis of a specialized repertoire of mRNAs and, together with other initiation factors, stimulates binding of mRNA and methionyl-tRNAi to the 40S ribosome. The eIF-3 complex specifically targets and initiates translation of a subset of mRNAs involved in cell proliferation. The chain is Eukaryotic translation initiation factor 3 subunit J (hcr1) from Aspergillus oryzae (strain ATCC 42149 / RIB 40) (Yellow koji mold).